A 533-amino-acid chain; its full sequence is Tyrosine-protein kinase transforming protein Fps (533 aa).

Residues 1–46 are disordered; sequence ASGQLHRPQPQEHTSTSAAAGTWRHTQASESRHRLPHCSAAPSHQD. Polar residues predominate over residues 11–29; sequence QEHTSTSAAAGTWRHTQAS. Residues 50–124 form the F-BAR; degenerate domain; sequence MGFGPELWCP…LQEDRQSVCS (75 aa). Residues 171–260 enclose the SH2 domain; sequence WYHGAIPRSE…KSGIVLTRAV (90 aa). The Protein kinase domain maps to 272 to 525; the sequence is VLLGERIGRG…PSFGAVHQDL (254 aa). Residues 278-286 and Lys301 contribute to the ATP site; that span reads IGRGNFGEV. Asp394 (proton acceptor) is an active-site residue. Tyr424 is modified (phosphotyrosine; by autocatalysis).

It belongs to the protein kinase superfamily. Tyr protein kinase family. Fes/fps subfamily.

It catalyses the reaction L-tyrosyl-[protein] + ATP = O-phospho-L-tyrosyl-[protein] + ADP + H(+). The protein is Tyrosine-protein kinase transforming protein Fps (V-FPS) of Gallus gallus (Chicken).